The chain runs to 339 residues: MSEEYTEKFKEAKDKILKAQSLNELEEVKRIYLGKQGFLTQILRSIGKMPQEERAKWGRLANEWKEELETLYENKERELKYLTLQKKLEGEKIDITLPGRRKILGRIHPINQVIEEIVTVFKEMGFQVVYGPELETDYYNFTALNIPSDHPVRESHDSFYIDKEHLLRTQTSPVQIRVMEKKKPPLRVVAPGKCYRRDMPDATHSPMFHQIEGLAVDTDITFAELKGVLTIFAHRLFGKERKVYFIPSYFPFTEPSAEMYVECGVCKGVGCKACGYSGVLEILGCGMVHPEVFRIVGIDPEKYTGFAFGMGPDRIAMQIYGIDDIRLFYENDIRFLKQF.

Residue Glu-254 participates in Mg(2+) binding.

Belongs to the class-II aminoacyl-tRNA synthetase family. Phe-tRNA synthetase alpha subunit type 1 subfamily. In terms of assembly, tetramer of two alpha and two beta subunits. The cofactor is Mg(2+).

It localises to the cytoplasm. It catalyses the reaction tRNA(Phe) + L-phenylalanine + ATP = L-phenylalanyl-tRNA(Phe) + AMP + diphosphate + H(+). The sequence is that of Phenylalanine--tRNA ligase alpha subunit from Dictyoglomus thermophilum (strain ATCC 35947 / DSM 3960 / H-6-12).